We begin with the raw amino-acid sequence, 973 residues long: Putative cell agglutination protein pfl3 (973 aa).

A signal peptide spans 1–24; sequence MSLFPQILLRLLFLAFTLKSTSNA. 7 N-linked (GlcNAc...) asparagine glycosylation sites follow: asparagine 75, asparagine 96, asparagine 147, asparagine 171, asparagine 184, asparagine 218, and asparagine 253. 18 consecutive repeat copies span residues 198–232, 233–267, 268–302, 303–337, 338–372, 373–407, 408–442, 443–477, 478–512, 513–547, 548–582, 583–617, 618–652, 653–687, 688–722, 723–757, 758–792, and 793–828. Residues 198–828 are 18 X 35 AA approximate tandem repeats; the sequence is GTITLTTISG…GTVLQVVPSL (631 aa). Asparagine 352 and asparagine 393 each carry an N-linked (GlcNAc...) asparagine glycan. Positions 820–973 constitute a DIPSY domain; it reads TVLQVVPSLF…SNVYFKAVPL (154 aa). Asparagine 848 is a glycosylation site (N-linked (GlcNAc...) asparagine).

The protein belongs to the mam3/map4 family.

Its subcellular location is the cell surface. Its function is as follows. May be involved in agglutination during conjugation or other aspects of colony formation. Induces flocculation when overexpressed. The protein is Putative cell agglutination protein pfl3 of Schizosaccharomyces pombe (strain 972 / ATCC 24843) (Fission yeast).